Here is a 640-residue protein sequence, read N- to C-terminus: Uromodulin (640 aa).

A signal peptide spans 1 to 24; the sequence is MGQPSLTWMLMVVVASWFITTAAT. The EGF-like 1 domain maps to 28–64; it reads EARWCSECHSNATCTEDEAVTTCTCQEGFTGDGLTCV. Cystine bridges form between Cys32-Cys41, Cys35-Cys50, Cys52-Cys63, Cys69-Cys83, Cys77-Cys92, Cys94-Cys106, Cys112-Cys126, Cys120-Cys135, Cys137-Cys148, Cys150-Cys161, Cys155-Cys170, Cys174-Cys267, Cys195-Cys282, Cys217-Cys255, Cys223-Cys287, Cys248-Cys256, Cys297-Cys306, Cys300-Cys315, Cys317-Cys347, Cys335-Cys425, and Cys366-Cys389. Residue Asn38 is glycosylated (N-linked (GlcNAc...) asparagine). One can recognise an EGF-like 2; calcium-binding domain in the interval 65–107; sequence DLDECAIPGAHNCSANSSCVNTPGSFSCVCPEGFRLSPGLGCT. N-linked (GlcNAc...) asparagine glycans are attached at residues Asn76 and Asn80. One can recognise an EGF-like 3; calcium-binding domain in the interval 108–149; the sequence is DVDECAEPGLSHCHALATCVNVVGSYLCVCPAGYRGDGWHCE. The beta hairpin stretch occupies residues 150–171; sequence CSPGSCGPGLDCVPEGDALVCA. The segment at 172 to 291 is D10C; that stretch reads DPCQAHRTLD…CHLAYCTDPS (120 aa). The N-linked (GlcNAc...) (complex) asparagine glycan is linked to Asn232. An N-linked (GlcNAc...) (high mannose) asparagine glycan is attached at Asn275. Residues 292 to 323 form the EGF-like 4 domain; it reads SVEGTCEECSIDEDCKSNNGRWHCQCKQDFNI. A glycan (N-linked (GlcNAc...) (complex) asparagine) is linked at Asn322. The tract at residues 334-429 is ZP-N; it reads ECGANDMKVS…KINFACSYPL (96 aa). In terms of domain architecture, ZP spans 334–589; it reads ECGANDMKVS…PTCSGTRFRS (256 aa). Residue Asn396 is glycosylated (N-linked (GlcNAc...) (complex) asparagine). The tract at residues 430-453 is flexible ZP-N/ZP-C linker; important for secretion and polymerization into filaments; it reads DMKVSLKTALQPMVSALNIRVGGT. The internal hydrophobic patch (IHP) stretch occupies residues 454–465; the sequence is GMFTVRMALFQT. The tract at residues 454–589 is ZP-C; it reads GMFTVRMALF…PTCSGTRFRS (136 aa). 3 cysteine pairs are disulfide-bonded: Cys506/Cys566, Cys527/Cys582, and Cys571/Cys578. Asn513 carries an N-linked (GlcNAc...) (complex) asparagine; alternate glycan. The N-linked (GlcNAc...) (high mannose) asparagine; alternate glycan is linked to Asn513. The segment at 586–589 is essential for cleavage by HPN; sequence RFRS. The interval 598-606 is external hydrophobic patch (EHP); regulates polymerization into filaments; the sequence is VLNLGPITR. Ser614 carries the GPI-anchor amidated serine lipid modification. A propeptide spans 615 to 640 (removed in mature form); that stretch reads RAFSSLGLLKVWLPLLLSATLTLTFQ.

As to quaternary structure, homodimer that then polymerizes into long filaments. The filaments can additionally assemble laterally to form a sheet. The filaments consist of a zigzag-shaped backbone with laterally protruding arms which interact with bacterial adhesin fimH. Two fimH molecules can bind to a single UMOD monomer. N-glycosylated. N-glycan heterogeneity at Asn-232: Hex7HexNAc6 (major) and dHex1Hex7HexNAc6 (minor); at Asn-322: dHex1Hex6HexNAc5 (minor), dHex1Hex7HexNAc6 (major) and dHex1Hex8HexNAc7 (minor); at Asn-396: Hex6HexNAc5 (major), dHex1Hex6HexNAc5 (minor) and Hex7HexNAc6 (minor). Glycosylated Asn-232 interacts with E.coli adhesin fimH. Other complex glycosylation sites may serve as binding sites for proteins from other bacteria inclduding K.pneumoniae, P.aeruginosa and S.mitis. In terms of processing, proteolytically cleaved at a conserved C-terminal proteolytic cleavage site to generate the secreted form found in urine. This cleavage is catalyzed by HPN. Expressed in the tubular cells of the kidney. Most abundant protein in normal urine (at protein level). Synthesized exclusively in the kidney. Expressed exclusively by epithelial cells of the thick ascending limb of Henle's loop (TALH) and of distal convoluted tubule lumen.

Its subcellular location is the apical cell membrane. The protein resides in the basolateral cell membrane. It is found in the cell projection. It localises to the cilium membrane. The protein localises to the secreted. In terms of biological role, functions in biogenesis and organization of the apical membrane of epithelial cells of the thick ascending limb of Henle's loop (TALH), where it promotes formation of complex filamentous gel-like structure that may play a role in the water barrier permeability. May serve as a receptor for binding and endocytosis of cytokines (IL-1, IL-2) and TNF. Facilitates neutrophil migration across renal epithelia. Functionally, in the urine, may contribute to colloid osmotic pressure, retards passage of positively charged electrolytes, and inhibits formation of liquid containing supersaturated salts and subsequent formation of salt crystals. Protects against urinary tract infections by binding to type 1 fimbriated E.coli. Binds to bacterial adhesin fimH which mediates the stable formation of bacterial aggregates, prevents the binding of E.coli to uroplakins UPK1A and UPK1B which act as urothelial receptors for type I fimbriae, and allows for pathogen clearance through micturation. Also promotes aggregation of other bacteria including K.pneumoniae, P.aeruginosa and S.mitis and so may also protect against other uropathogens. This is Uromodulin (UMOD) from Homo sapiens (Human).